A 210-amino-acid chain; its full sequence is Probable nicotinate-nucleotide adenylyltransferase (210 aa).

It belongs to the NadD family.

The enzyme catalyses nicotinate beta-D-ribonucleotide + ATP + H(+) = deamido-NAD(+) + diphosphate. The protein operates within cofactor biosynthesis; NAD(+) biosynthesis; deamido-NAD(+) from nicotinate D-ribonucleotide: step 1/1. Functionally, catalyzes the reversible adenylation of nicotinate mononucleotide (NaMN) to nicotinic acid adenine dinucleotide (NaAD). This Streptococcus pyogenes serotype M6 (strain ATCC BAA-946 / MGAS10394) protein is Probable nicotinate-nucleotide adenylyltransferase.